A 225-amino-acid polypeptide reads, in one-letter code: UPF0758 protein BB3258 (225 aa).

An MPN domain is found at 103–225; the sequence is ALANPDLVRR…TVSMAAQGHL (123 aa). Zn(2+) contacts are provided by His174, His176, and Asp187. Residues 174-187 carry the JAMM motif motif; the sequence is HNHPGGTAAASAAD.

It belongs to the UPF0758 family.

In Bordetella bronchiseptica (strain ATCC BAA-588 / NCTC 13252 / RB50) (Alcaligenes bronchisepticus), this protein is UPF0758 protein BB3258.